A 72-amino-acid chain; its full sequence is SRY-related protein AES1 (72 aa).

Residues 1–69 (VKRPMNAFMV…KHMADYPDYK (69 aa)) constitute a DNA-binding region (HMG box).

The protein localises to the nucleus. The chain is SRY-related protein AES1 from Alligator mississippiensis (American alligator).